The primary structure comprises 513 residues: V-type proton ATPase subunit B, kidney isoform (513 aa).

ATP is bound at residue Arg-394. The PDZ-binding signature appears at Asp-510–Leu-513.

The protein belongs to the ATPase alpha/beta chains family. As to quaternary structure, V-ATPase is a heteromultimeric enzyme made up of two complexes: the ATP-hydrolytic V1 complex and the proton translocation V0 complex. The V1 complex consists of three catalytic AB heterodimers that form a heterohexamer, three peripheral stalks each consisting of EG heterodimers, one central rotor including subunits D and F, and the regulatory subunits C and H. The proton translocation complex V0 consists of the proton transport subunit a, a ring of proteolipid subunits c9c'', rotary subunit d, subunits e and f, and the accessory subunits ATP6AP1/Ac45 and ATP6AP2/PRR. Forms a complex with NHERF1 and SCL4A7. Kidney; localizes to early distal nephron, encompassing thick ascending limbs and distal convoluted tubules (at protein level). Expressed in the cochlea and endolymphatic sac.

The protein resides in the apical cell membrane. The protein localises to the basolateral cell membrane. Non-catalytic subunit of the V1 complex of vacuolar(H+)-ATPase (V-ATPase), a multisubunit enzyme composed of a peripheral complex (V1) that hydrolyzes ATP and a membrane integral complex (V0) that translocates protons. V-ATPase is responsible for acidifying and maintaining the pH of intracellular compartments and in some cell types, is targeted to the plasma membrane, where it is responsible for acidifying the extracellular environment. Essential for the proper assembly and activity of V-ATPase. In renal intercalated cells, mediates secretion of protons (H+) into the urine thereby ensuring correct urinary acidification. Required for optimal olfactory function by mediating the acidification of the nasal olfactory epithelium. This Homo sapiens (Human) protein is V-type proton ATPase subunit B, kidney isoform (ATP6V1B1).